The sequence spans 348 residues: Holliday junction branch migration complex subunit RuvB (348 aa).

The tract at residues 1 to 20 is disordered; sequence MKPPARMVSPERRSDDVGDT. Positions 1–183 are large ATPase domain (RuvB-L); it reads MKPPARMVSP…FGIPIRLNFY (183 aa). Residues Leu22, Arg23, Gly64, Lys67, Thr68, Thr69, 130–132, Arg173, Tyr183, and Arg220 each bind ATP; that span reads EDF. Mg(2+) is bound at residue Thr68. Residues 184 to 254 are small ATPAse domain (RuvB-S); the sequence is TVEELEGIVT…IADHALSALE (71 aa). Positions 257 to 348 are head domain (RuvB-H); it reads AAGLDAMDRR…FGLFGSEDDA (92 aa). Residues Arg293, Arg312, and Arg317 each contribute to the DNA site.

It belongs to the RuvB family. In terms of assembly, homohexamer. Forms an RuvA(8)-RuvB(12)-Holliday junction (HJ) complex. HJ DNA is sandwiched between 2 RuvA tetramers; dsDNA enters through RuvA and exits via RuvB. An RuvB hexamer assembles on each DNA strand where it exits the tetramer. Each RuvB hexamer is contacted by two RuvA subunits (via domain III) on 2 adjacent RuvB subunits; this complex drives branch migration. In the full resolvosome a probable DNA-RuvA(4)-RuvB(12)-RuvC(2) complex forms which resolves the HJ.

Its subcellular location is the cytoplasm. The enzyme catalyses ATP + H2O = ADP + phosphate + H(+). Functionally, the RuvA-RuvB-RuvC complex processes Holliday junction (HJ) DNA during genetic recombination and DNA repair, while the RuvA-RuvB complex plays an important role in the rescue of blocked DNA replication forks via replication fork reversal (RFR). RuvA specifically binds to HJ cruciform DNA, conferring on it an open structure. The RuvB hexamer acts as an ATP-dependent pump, pulling dsDNA into and through the RuvAB complex. RuvB forms 2 homohexamers on either side of HJ DNA bound by 1 or 2 RuvA tetramers; 4 subunits per hexamer contact DNA at a time. Coordinated motions by a converter formed by DNA-disengaged RuvB subunits stimulates ATP hydrolysis and nucleotide exchange. Immobilization of the converter enables RuvB to convert the ATP-contained energy into a lever motion, pulling 2 nucleotides of DNA out of the RuvA tetramer per ATP hydrolyzed, thus driving DNA branch migration. The RuvB motors rotate together with the DNA substrate, which together with the progressing nucleotide cycle form the mechanistic basis for DNA recombination by continuous HJ branch migration. Branch migration allows RuvC to scan DNA until it finds its consensus sequence, where it cleaves and resolves cruciform DNA. This Bradyrhizobium sp. (strain BTAi1 / ATCC BAA-1182) protein is Holliday junction branch migration complex subunit RuvB.